Consider the following 147-residue polypeptide: Urease accessory protein UreE (147 aa).

Belongs to the UreE family.

The protein resides in the cytoplasm. Functionally, involved in urease metallocenter assembly. Binds nickel. Probably functions as a nickel donor during metallocenter assembly. The protein is Urease accessory protein UreE of Marinomonas sp. (strain MWYL1).